A 442-amino-acid polypeptide reads, in one-letter code: DMATS-type prenyltransferase mfmD (442 aa).

The protein belongs to the tryptophan dimethylallyltransferase family.

It participates in secondary metabolite biosynthesis; terpenoid biosynthesis. Functionally, prenyltransferase; part of the gene cluster that mediates the biosynthesis of the phthalide-terpenoid hybrid 11'-O-desmethylfendlerol. Within the pathway, mfmD is responsible for farnesylation of the cyclopolic acid intermediate via an O-prenylation reaction. The biosynthesis of 11'-O-desmethylfendlerol begins with the NR-PKS mfmB that forms 3,5-dimethylorsellinic acid (DMOA), which is then transformed into the phthalide 5,7-dihydroxy-4-(hydroxymethyl)-6-methylphthalide by the cytochrome P450 monooxygenase mfmA and the hydrolase mfmC. Subsequently, the methyltransferase mfmE catalyzes 7-O-methylation to yield 5-hydroxy-4-(hydroxymethyl)-7-methoxy-6-methylphthalide, which undergoes C-3 hydroxylation by the cytochrome P450 monooxygenase mfmF. The resultant cyclopolic acid (2,5-dihydroxy-4-(hydroxymethyl)-7-methoxy-6-methylphthalide) is then farnesylated by the DMATS-type prenyltransferase mfmD to afford 5-O-farnesylcyclopolic acid. Finally, the Pyr4-family terpene cyclase mfmH cyclizes the farnesyl moiety of 5-O-farnesylcyclopolic acid into a drimane-like structure, thus completing the biosynthesis of 11'-O-desmethylfendlerol. The sequence is that of DMATS-type prenyltransferase mfmD from Annulohypoxylon moriforme (Filamentous fungus).